We begin with the raw amino-acid sequence, 428 residues long: Keratin, type I cytoskeletal 18-A (428 aa).

The interval 2–78 (SFRSQTSSTT…SVKGSGLFNN (77 aa)) is head. Residues 79-114 (EKETMQILNDRLASYLETVRNLEQANSKLELQIRET) form a coil 1A region. Positions 79–390 (EKETMQILND…RLLDGEDFRL (312 aa)) constitute an IF rod domain. The linker 1 stretch occupies residues 115-131 (LEKRGPTTQDYSAYEKV). The interval 132-223 (VEDLKSQIYD…RSHQTDVEEL (92 aa)) is coil 1B. Positions 224–247 (RKHISECGVQVDVDAPKGQDLSKI) are linker 12. Residues 248-385 (MEEIRAQYET…IATYRRLLDG (138 aa)) form a coil 2 region. A tail region spans residues 386–428 (EDFRLQDALAVQTTKVQKKITVTETVVDGKVVSQSSEVQEIKK).

It belongs to the intermediate filament family. As to quaternary structure, heterotetramer of two type I and two type II keratins. Keratin-18 associates with keratin-8. In terms of processing, phosphorylated. Post-translationally, proteolytically cleaved by caspases during epithelial cell apoptosis.

When phosphorylated, plays a role in filament reorganization. In Polypterus senegalus (Senegal bichir), this protein is Keratin, type I cytoskeletal 18-A.